Consider the following 417-residue polypeptide: Serine hydroxymethyltransferase (417 aa).

(6S)-5,6,7,8-tetrahydrofolate is bound by residues leucine 121 and 125-127 (GHL). Lysine 229 is modified (N6-(pyridoxal phosphate)lysine). 355 to 357 (SPF) provides a ligand contact to (6S)-5,6,7,8-tetrahydrofolate.

This sequence belongs to the SHMT family. Homodimer. The cofactor is pyridoxal 5'-phosphate.

The protein resides in the cytoplasm. The enzyme catalyses (6R)-5,10-methylene-5,6,7,8-tetrahydrofolate + glycine + H2O = (6S)-5,6,7,8-tetrahydrofolate + L-serine. It participates in one-carbon metabolism; tetrahydrofolate interconversion. It functions in the pathway amino-acid biosynthesis; glycine biosynthesis; glycine from L-serine: step 1/1. Its function is as follows. Catalyzes the reversible interconversion of serine and glycine with tetrahydrofolate (THF) serving as the one-carbon carrier. This reaction serves as the major source of one-carbon groups required for the biosynthesis of purines, thymidylate, methionine, and other important biomolecules. Also exhibits THF-independent aldolase activity toward beta-hydroxyamino acids, producing glycine and aldehydes, via a retro-aldol mechanism. The chain is Serine hydroxymethyltransferase from Xanthomonas campestris pv. campestris (strain 8004).